Reading from the N-terminus, the 158-residue chain is Large ribosomal subunit protein uL13 (158 aa).

This sequence belongs to the universal ribosomal protein uL13 family. Part of the 50S ribosomal subunit.

In terms of biological role, this protein is one of the early assembly proteins of the 50S ribosomal subunit, although it is not seen to bind rRNA by itself. It is important during the early stages of 50S assembly. This is Large ribosomal subunit protein uL13 from Rickettsia canadensis (strain McKiel).